The primary structure comprises 931 residues: Phosphoenolpyruvate carboxylase (931 aa).

Catalysis depends on residues H158 and K593.

It belongs to the PEPCase type 1 family. Requires Mg(2+) as cofactor.

It catalyses the reaction oxaloacetate + phosphate = phosphoenolpyruvate + hydrogencarbonate. Functionally, forms oxaloacetate, a four-carbon dicarboxylic acid source for the tricarboxylic acid cycle. The polypeptide is Phosphoenolpyruvate carboxylase (Azorhizobium caulinodans (strain ATCC 43989 / DSM 5975 / JCM 20966 / LMG 6465 / NBRC 14845 / NCIMB 13405 / ORS 571)).